The primary structure comprises 321 residues: Glucokinase (321 aa).

Residue 8–13 (GDVGGT) participates in ATP binding.

Belongs to the bacterial glucokinase family.

It is found in the cytoplasm. It carries out the reaction D-glucose + ATP = D-glucose 6-phosphate + ADP + H(+). The polypeptide is Glucokinase (Salmonella paratyphi B (strain ATCC BAA-1250 / SPB7)).